The following is a 383-amino-acid chain: Teichoic acid glycerol-phosphate primase (383 aa).

Belongs to the CDP-glycerol glycerophosphotransferase family.

Its subcellular location is the cell membrane. It carries out the reaction N-acetyl-beta-D-mannosaminyl-(1-&gt;4)-N-acetyl-alpha-D-glucosaminyl di-trans,octa-cis-undecaprenyl diphosphate + CDP-glycerol = 4-O-[(2R)-glycerylphospho]-N-acetyl-beta-D-mannosaminyl-(1-&gt;4)-N-acetyl-alpha-D-glucosaminyl di-trans,octa-cis-undecaprenyl diphosphate + CMP + H(+). It participates in cell wall biogenesis; poly(ribitol phosphate) teichoic acid biosynthesis. In terms of biological role, catalyzes the addition of a single glycerol phosphate residue to the prenoldiphosphate-linked disaccharide. In Bacillus spizizenii (strain ATCC 23059 / NRRL B-14472 / W23) (Bacillus subtilis subsp. spizizenii), this protein is Teichoic acid glycerol-phosphate primase (tarB).